A 160-amino-acid polypeptide reads, in one-letter code: UPF0260 protein GDI1595/Gdia_1801 (160 aa).

Belongs to the UPF0260 family.

The protein is UPF0260 protein GDI1595/Gdia_1801 of Gluconacetobacter diazotrophicus (strain ATCC 49037 / DSM 5601 / CCUG 37298 / CIP 103539 / LMG 7603 / PAl5).